Reading from the N-terminus, the 109-residue chain is Cortistatin (109 aa).

A signal peptide spans Met1–Ala25. Residues Ser26 to Asp93 constitute a propeptide that is removed on maturation. The interval Ala64–Cys97 is disordered. Cys97 and Cys108 are joined by a disulfide.

The protein belongs to the somatostatin family. As to expression, expressed in a subset of GABAergic cells in the cortex and hippocampus.

It is found in the secreted. In Mus musculus (Mouse), this protein is Cortistatin (Cort).